The primary structure comprises 417 residues: Acetyltransferase nanB (417 aa).

The signal sequence occupies residues 1–24; sequence MRPSTTTLSLLVFLISSILLATTG. 5 helical membrane passes run 150-170, 284-304, 307-327, 356-376, and 389-409; these read LAVS…LKNI, YLNN…FNWI, VQDG…GYFL, VGAL…VYPF, and FVDV…AAAL.

This sequence belongs to the wax synthase family.

Its subcellular location is the membrane. Its pathway is secondary metabolite biosynthesis. In terms of biological role, acetyltransferase; part of the gene cluster that mediates the biosynthesis of the benzazepine alkaloid nanangelenin A which contains an unprecedented 3,4-dihydro-1-benzazepine-2,5-dione-N-prenyl-N-acetoxy-anthranilamide scaffold. The first step of nanangelenin biosynthesis is catalyzed by the indoleamine 2,3-dioxygenase nanC which produces N-formyl-kynurenine through the catabolism of tryptophan. The two-module NRPS nanA then utilizes anthranilate (Ant) and L-kynurenine (L-Kyn) to assemble the dipeptide product nanangelenin B. The first adenylation domain of nanA (A1) loads anthranilate onto the T1 domain, while A2 loads kynurenine, generated through spontaneous nonenzymatic deformylation of the nanC-supplied N-formyl-kynurenine. The peptide bond formation between the tethered amino acids is catalyzed by the first condensation domain (C1) between anthranilate's carbonyl carbon and kynurenine's aliphatic primary amine. The second C domain (C2) catalyzes the final cyclization event between the aromatic amine of kynurenine and the tethered carbonyl carbon, yielding nanangelenin B. The terminal T3 domain enhances the catalytic efficiency of C2, suggesting the T2-tethered Ant-L-Kyn is transferred to T3 prior to cyclization by C2. Once released from nanA, nanangelenin B is then prenylated by the prenyltransferase nanD to form nanangelenin C. Nanangelenin C is then N-hydroxylated by the FAD-dependent monooxygenase nanF and further acetylated by the acetyltransferase nanB to yield nanangelenin F. Finally, the N-methyltransferase nanE methylates the amide nitrogen of 1-benzazepine to convert nanangelenin F into nanangelenin A. NanE is also able to methylate most of the intermediates of the pathway such as nanangelenin B and nanangelenin C to produce nanangelenin D and nanangelenin E, respectively. The sequence is that of Acetyltransferase nanB from Aspergillus nanangensis.